An 874-amino-acid polypeptide reads, in one-letter code: MKTTAEIRQSFLDFFHSKGHQVVESSSLVPENDPTLLFTNAGMNQFKDVFLGMDKRPYSRATTAQRCVRAGGKHNDLENVGYTARHHTFFEMMGNFSFGDYFKYDAINFAWEFLTSPKWLALPKEKLYVTVYETDDEAYDIWNKEVGVPQEHIIRIGDNKGAPYASDNFWAMGDTGPCGPCTEIFYDHGDHIWGGLPGTPEEDGDRYIEIWNIVFMQFNRLADGTMEKLPKPSVDTGMGLERMTAVLQHVNSNYEIDIFQTLIKKVAEIVGTTDLGNKSLRVIADHIRSCAYLIADGVIPSNEGRGYVLRRIIRRAVRHGHLLGAKETFFYKLVPTLIEVMAEAGKQVKEKQANVEKLLRLEEEQFARTLERGLILLDAELANVKNGVLSGEVAFKLYDTYGFPLDLTADVCRERNIAVDENGFDKEMEAQRLRAQSASNFGMDYTSIIRVDGETKFEGYTNVESLAKVTALFRDGKAVESVSAGQSAVVILENTPFYAEMGGQIGDSGMLTANGLHFDVKDTQKYGQVFGHIGELTQGTLSVGQIVNAQVDAQRRQYTKLNHSATHLLHAALRQVLGEHVAQKGSLVSDVGLRFDFVQPEAVTKEQIMEIERLVNFHIRANHPVLTEEMGVAEAKSKGAIALFGEKYGETVRVVTMSPFSIELCGGLHVERTGEIGLLKIISEGAVAAGIRRVEAVTGEEAINWLFNQQTILAQSADLLKSDIPSLPEKIIQLQDKVKKTEKELQQLKEKAAMQAGSDLAKSAVKINGVSVVTHQLDGADAKVLRVMVDDLKNQLGSAVIALGSASGGKVNLIAGVTADLTAKVKAGELVNVMAQQVGGKGGGRPDMAMAGGSQPENLSAALIVASDWLKTMI.

Residues histidine 563, histidine 567, cysteine 665, and histidine 669 each contribute to the Zn(2+) site.

Belongs to the class-II aminoacyl-tRNA synthetase family. The cofactor is Zn(2+).

Its subcellular location is the cytoplasm. The enzyme catalyses tRNA(Ala) + L-alanine + ATP = L-alanyl-tRNA(Ala) + AMP + diphosphate. Catalyzes the attachment of alanine to tRNA(Ala) in a two-step reaction: alanine is first activated by ATP to form Ala-AMP and then transferred to the acceptor end of tRNA(Ala). Also edits incorrectly charged Ser-tRNA(Ala) and Gly-tRNA(Ala) via its editing domain. The polypeptide is Alanine--tRNA ligase (Actinobacillus succinogenes (strain ATCC 55618 / DSM 22257 / CCUG 43843 / 130Z)).